A 30-amino-acid polypeptide reads, in one-letter code: Kalata-B16 (30 aa).

The cyclopeptide (Gly-Asp) cross-link spans glycine 1–aspartate 30. Intrachain disulfides connect cysteine 4-cysteine 21, cysteine 8-cysteine 23, and cysteine 13-cysteine 28.

In terms of processing, this is a cyclic peptide.

Its function is as follows. Probably participates in a plant defense mechanism. In Oldenlandia affinis, this protein is Kalata-B16.